Consider the following 301-residue polypeptide: Probable 5-dehydro-4-deoxyglucarate dehydratase (301 aa).

Belongs to the DapA family.

The catalysed reaction is 5-dehydro-4-deoxy-D-glucarate + H(+) = 2,5-dioxopentanoate + CO2 + H2O. It functions in the pathway carbohydrate acid metabolism; D-glucarate degradation; 2,5-dioxopentanoate from D-glucarate: step 2/2. The polypeptide is Probable 5-dehydro-4-deoxyglucarate dehydratase (Xanthobacter autotrophicus (strain ATCC BAA-1158 / Py2)).